A 295-amino-acid polypeptide reads, in one-letter code: Ribosomal RNA small subunit methyltransferase A (295 aa).

Positions 40, 42, 67, 88, 118, and 135 each coordinate S-adenosyl-L-methionine.

This sequence belongs to the class I-like SAM-binding methyltransferase superfamily. rRNA adenine N(6)-methyltransferase family. RsmA subfamily.

It localises to the cytoplasm. It carries out the reaction adenosine(1518)/adenosine(1519) in 16S rRNA + 4 S-adenosyl-L-methionine = N(6)-dimethyladenosine(1518)/N(6)-dimethyladenosine(1519) in 16S rRNA + 4 S-adenosyl-L-homocysteine + 4 H(+). Specifically dimethylates two adjacent adenosines (A1518 and A1519) in the loop of a conserved hairpin near the 3'-end of 16S rRNA in the 30S particle. May play a critical role in biogenesis of 30S subunits. This chain is Ribosomal RNA small subunit methyltransferase A, found in Arthrobacter sp. (strain FB24).